We begin with the raw amino-acid sequence, 287 residues long: 4-hydroxybenzoate octaprenyltransferase (287 aa).

The next 9 helical transmembrane spans lie at 7 to 27 (FISYGYLIRLDKPIGTLLLLW), 30 to 50 (LWALWLASSGVLDLSILLIFV), 94 to 114 (VAVASFLALCAFLLIQPLNAF), 118 to 138 (LSVLALLVAFIYPFTKRFFAM), 142 to 162 (VLGIAFGFGIPMAYAAILDFI), 167 to 187 (WFLFTGNIFWAIAYDTAYAMV), 209 to 229 (VVVIAISYGMLFLSHLWVAQL), 235 to 255 (YFLVGWFAALACAIYHLKLVS), and 266 to 286 (FRHNNWLGGFLFLGIVLGLGV).

This sequence belongs to the UbiA prenyltransferase family. Mg(2+) serves as cofactor.

The protein localises to the cell inner membrane. It catalyses the reaction all-trans-octaprenyl diphosphate + 4-hydroxybenzoate = 4-hydroxy-3-(all-trans-octaprenyl)benzoate + diphosphate. Its pathway is cofactor biosynthesis; ubiquinone biosynthesis. Functionally, catalyzes the prenylation of para-hydroxybenzoate (PHB) with an all-trans polyprenyl group. Mediates the second step in the final reaction sequence of ubiquinone-8 (UQ-8) biosynthesis, which is the condensation of the polyisoprenoid side chain with PHB, generating the first membrane-bound Q intermediate 3-octaprenyl-4-hydroxybenzoate. The polypeptide is 4-hydroxybenzoate octaprenyltransferase (Polynucleobacter necessarius subsp. necessarius (strain STIR1)).